A 156-amino-acid polypeptide reads, in one-letter code: Small ribosomal subunit protein uS7 (156 aa).

This sequence belongs to the universal ribosomal protein uS7 family. Part of the 30S ribosomal subunit. Contacts proteins S9 and S11.

Its function is as follows. One of the primary rRNA binding proteins, it binds directly to 16S rRNA where it nucleates assembly of the head domain of the 30S subunit. Is located at the subunit interface close to the decoding center, probably blocks exit of the E-site tRNA. In Shewanella baltica (strain OS223), this protein is Small ribosomal subunit protein uS7.